The sequence spans 1259 residues: Cingulin (1259 aa).

The segment at 9–324 (MADQPIPVGQ…EKFPSLQAQP (316 aa)) is head. A ZIM motif is present at residues 41 to 55 (QDSYGVAVRVQGIDG). A compositionally biased stretch (basic and acidic residues) spans 69 to 79 (SSYDYDRHYSE). Disordered regions lie at residues 69-151 (SSYD…IDTK), 169-232 (VRGR…RQSL), 317-338 (FPSL…KKEL), 941-969 (KSRR…NSSR), and 1192-1259 (REME…TSSC). Over residues 80 to 100 (RSSTLDTAYSQSSRESAWSRG) the composition is skewed to polar residues. Low complexity predominate over residues 117–127 (SATSQQSTSAS). Positions 128–145 (NKTNKNGLSTSSFSNQSS) are enriched in polar residues. Positions 179–204 (ALKDERKRSQSLDGRKNYQDTADSRE) are enriched in basic and acidic residues. Residues 220-229 (VSSANRSFAR) show a composition bias toward polar residues. The stretch at 325–1218 (GEDTRSLGSQ…KTMEKESKRK (894 aa)) forms a coiled coil. Basic and acidic residues predominate over residues 326–338 (EDTRSLGSQKKEL). The tail stretch occupies residues 1220–1259 (IRPAHNDDDDLSSDGEYGGSYDPSSITSLLTESNLQTSSC). A compositionally biased stretch (polar residues) spans 1241–1259 (DPSSITSLLTESNLQTSSC).

This sequence belongs to the cingulin family. Parallel homodimer. Interacts with TJP1/ZO1 and TJP2/ZO2.

The protein resides in the cell junction. Its subcellular location is the tight junction. Probably plays a role in the formation and regulation of the tight junction (TJ) paracellular permeability barrier, possibly by linking ZO proteins to the actomyosin cytoskeleton. The protein is Cingulin of Xenopus tropicalis (Western clawed frog).